The sequence spans 119 residues: Small ribosomal subunit protein uS13 (119 aa).

The interval 90–119 (IRHRRGLPLRGQRTRSNARTRKGKRKPIRS) is disordered. Positions 91–119 (RHRRGLPLRGQRTRSNARTRKGKRKPIRS) are enriched in basic residues.

This sequence belongs to the universal ribosomal protein uS13 family. In terms of assembly, part of the 30S ribosomal subunit. Forms a loose heterodimer with protein S19. Forms two bridges to the 50S subunit in the 70S ribosome.

Functionally, located at the top of the head of the 30S subunit, it contacts several helices of the 16S rRNA. In the 70S ribosome it contacts the 23S rRNA (bridge B1a) and protein L5 of the 50S subunit (bridge B1b), connecting the 2 subunits; these bridges are implicated in subunit movement. Contacts the tRNAs in the A and P-sites. The protein is Small ribosomal subunit protein uS13 of Coxiella burnetii (strain CbuK_Q154) (Coxiella burnetii (strain Q154)).